A 568-amino-acid polypeptide reads, in one-letter code: Urease subunit alpha (568 aa).

Positions 130-568 constitute a Urease domain; the sequence is GGIDTHIHFI…LPMAQRYFLF (439 aa). Ni(2+) is bound by residues His135, His137, and Lys218. The residue at position 218 (Lys218) is an N6-carboxylysine. Residue His220 participates in substrate binding. Ni(2+)-binding residues include His247 and His273. The active-site Proton donor is the His321. Asp361 contributes to the Ni(2+) binding site.

This sequence belongs to the metallo-dependent hydrolases superfamily. Urease alpha subunit family. Heterotrimer of UreA (gamma), UreB (beta) and UreC (alpha) subunits. Three heterotrimers associate to form the active enzyme. It depends on Ni cation as a cofactor. Carboxylation allows a single lysine to coordinate two nickel ions.

It localises to the cytoplasm. The catalysed reaction is urea + 2 H2O + H(+) = hydrogencarbonate + 2 NH4(+). It functions in the pathway nitrogen metabolism; urea degradation; CO(2) and NH(3) from urea (urease route): step 1/1. In Burkholderia ambifaria (strain ATCC BAA-244 / DSM 16087 / CCUG 44356 / LMG 19182 / AMMD) (Burkholderia cepacia (strain AMMD)), this protein is Urease subunit alpha.